Consider the following 260-residue polypeptide: Ubiquinone/menaquinone biosynthesis C-methyltransferase UbiE (260 aa).

S-adenosyl-L-methionine is bound by residues threonine 83, aspartate 104, 132-133 (NA), and serine 149.

This sequence belongs to the class I-like SAM-binding methyltransferase superfamily. MenG/UbiE family.

The catalysed reaction is a 2-demethylmenaquinol + S-adenosyl-L-methionine = a menaquinol + S-adenosyl-L-homocysteine + H(+). It carries out the reaction a 2-methoxy-6-(all-trans-polyprenyl)benzene-1,4-diol + S-adenosyl-L-methionine = a 5-methoxy-2-methyl-3-(all-trans-polyprenyl)benzene-1,4-diol + S-adenosyl-L-homocysteine + H(+). The protein operates within quinol/quinone metabolism; menaquinone biosynthesis; menaquinol from 1,4-dihydroxy-2-naphthoate: step 2/2. Its pathway is cofactor biosynthesis; ubiquinone biosynthesis. Its function is as follows. Methyltransferase required for the conversion of demethylmenaquinol (DMKH2) to menaquinol (MKH2) and the conversion of 2-polyprenyl-6-methoxy-1,4-benzoquinol (DDMQH2) to 2-polyprenyl-3-methyl-6-methoxy-1,4-benzoquinol (DMQH2). The polypeptide is Ubiquinone/menaquinone biosynthesis C-methyltransferase UbiE (Vibrio vulnificus (strain CMCP6)).